Consider the following 370-residue polypeptide: DNA replication and repair protein RecF (370 aa).

33–40 (GPNAAGKT) contacts ATP.

Belongs to the RecF family.

Its subcellular location is the cytoplasm. Its function is as follows. The RecF protein is involved in DNA metabolism; it is required for DNA replication and normal SOS inducibility. RecF binds preferentially to single-stranded, linear DNA. It also seems to bind ATP. The sequence is that of DNA replication and repair protein RecF from Moorella thermoacetica (strain ATCC 39073 / JCM 9320).